A 525-amino-acid polypeptide reads, in one-letter code: GMP synthase [glutamine-hydrolyzing] (525 aa).

Positions R9–L207 constitute a Glutamine amidotransferase type-1 domain. The Nucleophile role is filled by C86. Catalysis depends on residues H181 and E183. Positions W208–R400 constitute a GMPS ATP-PPase domain. Residue S235–S241 participates in ATP binding.

As to quaternary structure, homodimer.

The enzyme catalyses XMP + L-glutamine + ATP + H2O = GMP + L-glutamate + AMP + diphosphate + 2 H(+). Its pathway is purine metabolism; GMP biosynthesis; GMP from XMP (L-Gln route): step 1/1. Catalyzes the synthesis of GMP from XMP. This Escherichia coli O8 (strain IAI1) protein is GMP synthase [glutamine-hydrolyzing].